A 130-amino-acid chain; its full sequence is Small ribosomal subunit protein uS9 (130 aa).

This sequence belongs to the universal ribosomal protein uS9 family.

This chain is Small ribosomal subunit protein uS9, found in Xylella fastidiosa (strain 9a5c).